The sequence spans 147 residues: Large ribosomal subunit protein bL9 (147 aa).

It belongs to the bacterial ribosomal protein bL9 family.

Its function is as follows. Binds to the 23S rRNA. In Exiguobacterium sp. (strain ATCC BAA-1283 / AT1b), this protein is Large ribosomal subunit protein bL9.